The primary structure comprises 464 residues: MVAHRATRRKRASATQLYKTCKLSGTCPEDVINKVEQKTWADRILQWGSLFTYFGGLGIGTGSGSGGRAGYVPLGSRPSTIVDVTPARPPIVVESVGPTDPSIVTLVEESSVINSGAGVPNFTGSGGFEVTSSSTTTPAVLDITPTSSTVHVSSTTITNPLYIDPPVIEAPQTGEVSGNILISTPTSGIHSYEEIPMQTFAIHGTGNEPISSTPIPGFRRLAAPRLYSRAFQQVRVTDPAFLDNPTTLISADNPVFEGADTTLTFSPSGVAPDPDFMDIVALHRPAFTTRRTGVRFSRLGKKATMQTRRGTQIGARVHYYYDISPIAQADEIEMQPLLSTDNSFDGLYDIYANIDDEAPISFRQSGATPSAQLPIKPSTLSFASNTANVTAPLGNVWETPFYSGPDIVLPTGPSTWPFVPQSPSDVTHDVYIQGATFALWPVYFFKRRRRKRIPYFFADGDVAA.

The Nuclear localization signal signature appears at Met1–Ala12. Residues Cys21 and Cys27 are joined by a disulfide bond. The Nuclear localization signal signature appears at Phe445 to Ile453.

It belongs to the papillomaviridae L2 protein family. In terms of assembly, interacts with major capsid protein L1. Interacts with E2; this interaction inhibits E2 transcriptional activity but not the DNA replication function E2. Interacts with host GADD45GIP1. Interacts with host HSPA8; this interaction is required for L2 nuclear translocation. Interacts with host importins KPNB2 and KPNB3. Forms a complex with importin alpha2-beta1 heterodimers via interaction with the importin alpha2 adapter. Interacts with host DYNLT1; this interaction is essential for virus intracellular transport during entry. Interacts (via C-terminus) with host retromer subunits VPS35 and VPS29. Post-translationally, highly phosphorylated.

The protein resides in the virion. It is found in the host nucleus. It localises to the host early endosome. Its subcellular location is the host Golgi apparatus. Its function is as follows. Minor protein of the capsid that localizes along the inner surface of the virion, within the central cavities beneath the L1 pentamers. Plays a role in capsid stabilization through interaction with the major capsid protein L1. Once the virion enters the host cell, L2 escorts the genomic DNA into the nucleus by promoting escape from the endosomal compartments and traffic through the host Golgi network. Mechanistically, the C-terminus of L2 possesses a cell-penetrating peptide that protudes from the host endosome, interacts with host cytoplasmic retromer cargo and thereby mediates the capsid delivery to the host trans-Golgi network. Plays a role through its interaction with host dynein in the intracellular microtubule-dependent transport of viral capsid toward the nucleus. Mediates the viral genome import into the nucleus through binding to host importins. Once within the nucleus, L2 localizes viral genomes to host PML bodies in order to activate early gene expression for establishment of infection. Later on, promotes late gene expression by interacting with the viral E2 protein and by inhibiting its transcriptional activation functions. During virion assembly, encapsidates the genome by direct interaction with the viral DNA. The polypeptide is Minor capsid protein L2 (Human papillomavirus 66).